A 616-amino-acid polypeptide reads, in one-letter code: Chaperone protein HscA (616 aa).

The protein belongs to the heat shock protein 70 family.

Chaperone involved in the maturation of iron-sulfur cluster-containing proteins. Has a low intrinsic ATPase activity which is markedly stimulated by HscB. Involved in the maturation of IscU. The chain is Chaperone protein HscA from Salmonella paratyphi B (strain ATCC BAA-1250 / SPB7).